A 348-amino-acid chain; its full sequence is Histidinol-phosphate aminotransferase (348 aa).

N6-(pyridoxal phosphate)lysine is present on Lys207.

Belongs to the class-II pyridoxal-phosphate-dependent aminotransferase family. Histidinol-phosphate aminotransferase subfamily. Homodimer. Pyridoxal 5'-phosphate is required as a cofactor.

It carries out the reaction L-histidinol phosphate + 2-oxoglutarate = 3-(imidazol-4-yl)-2-oxopropyl phosphate + L-glutamate. It participates in amino-acid biosynthesis; L-histidine biosynthesis; L-histidine from 5-phospho-alpha-D-ribose 1-diphosphate: step 7/9. In Crocosphaera subtropica (strain ATCC 51142 / BH68) (Cyanothece sp. (strain ATCC 51142)), this protein is Histidinol-phosphate aminotransferase.